The primary structure comprises 394 residues: Phosphopentomutase (394 aa).

Mn(2+)-binding residues include aspartate 10, aspartate 282, histidine 287, aspartate 323, histidine 324, and histidine 335.

This sequence belongs to the phosphopentomutase family. It depends on Mn(2+) as a cofactor.

The protein resides in the cytoplasm. The catalysed reaction is 2-deoxy-alpha-D-ribose 1-phosphate = 2-deoxy-D-ribose 5-phosphate. It carries out the reaction alpha-D-ribose 1-phosphate = D-ribose 5-phosphate. Its pathway is carbohydrate degradation; 2-deoxy-D-ribose 1-phosphate degradation; D-glyceraldehyde 3-phosphate and acetaldehyde from 2-deoxy-alpha-D-ribose 1-phosphate: step 1/2. In terms of biological role, isomerase that catalyzes the conversion of deoxy-ribose 1-phosphate (dRib-1-P) and ribose 1-phosphate (Rib-1-P) to deoxy-ribose 5-phosphate (dRib-5-P) and ribose 5-phosphate (Rib-5-P), respectively. This chain is Phosphopentomutase, found in Dictyoglomus turgidum (strain DSM 6724 / Z-1310).